Consider the following 833-residue polypeptide: Transmembrane protease serine 7 (833 aa).

Residues 1–62 (MDKEKSDPSC…RAPFWNVQNK (62 aa)) lie on the Cytoplasmic side of the membrane. The interval 30–49 (KLPGRRLPRKPIGKARPRKQ) is disordered. Residues 32–49 (PGRRLPRKPIGKARPRKQ) are compositionally biased toward basic residues. Residues 63-83 (IILFTVFLFILAVTAWTLLWL) traverse the membrane as a helical; Signal-anchor for type II membrane protein segment. Residues 84-829 (YISKTDSKDA…NFVPWIHKYV (746 aa)) lie on the Extracellular side of the membrane. Residues 92-220 (DAFYFVGMFR…DSVVLNAGLR (129 aa)) enclose the SEA domain. Asn-196 carries an N-linked (GlcNAc...) asparagine glycan. 3 disulfides stabilise this stretch: Cys-233/Cys-259, Cys-285/Cys-312, and Cys-355/Cys-386. CUB domains are found at residues 233–350 (CSQY…FEVI) and 355–471 (CENT…YNIS). Residues Asn-405 and Asn-469 are each glycosylated (N-linked (GlcNAc...) asparagine). 2 LDL-receptor class A domains span residues 473 to 509 (PCPA…LFCV) and 548 to 585 (PCTN…EGCG). Disulfide bonds link Cys-474/Cys-486, Cys-481/Cys-499, Cys-493/Cys-508, Cys-549/Cys-561, Cys-556/Cys-575, Cys-569/Cys-584, and Cys-621/Cys-637. The 235-residue stretch at 596 to 830 (VVGGSDSQEG…FVPWIHKYVP (235 aa)) folds into the Peptidase S1 domain. Residues His-636 and Asp-684 each act as charge relay system in the active site. 3 cysteine pairs are disulfide-bonded: Cys-720-Cys-786, Cys-752-Cys-765, and Cys-776-Cys-806. Ser-780 serves as the catalytic Charge relay system.

It belongs to the peptidase S1 family. Forms a heterodimer with SERPINA5. Post-translationally, N-glycosylated.

The protein resides in the cell membrane. In terms of biological role, serine protease which preferentially hydrolyzes peptides with Arg at the P1 position. This Rattus norvegicus (Rat) protein is Transmembrane protease serine 7.